The sequence spans 187 residues: Benzene 1,2-dioxygenase subunit beta (187 aa).

The protein belongs to the bacterial ring-hydroxylating dioxygenase beta subunit family. This dioxygenase system consists of four proteins: the two subunits of the hydroxylase component (BnzA and BnzB), a ferredoxin (BnzC) and a ferredoxin reductase (BnzD). Requires [2Fe-2S] cluster as cofactor. Fe cation is required as a cofactor.

It carries out the reaction benzene + NADH + O2 + H(+) = cis-1,2-dihydrobenzene-1,2-diol + NAD(+). The enzyme catalyses toluene + NADH + O2 + H(+) = (1S,2R)-3-methylcyclohexa-3,5-diene-1,2-diol + NAD(+). It functions in the pathway aromatic compound metabolism; benzene degradation; catechol from benzene: step 1/2. Its pathway is xenobiotic degradation; toluene degradation. The protein operates within xenobiotic degradation; xylene degradation. Functionally, catalyzes both the oxidation of benzene and toluene. The beta subunit may be responsible for the substrate specificity of the enzyme. The polypeptide is Benzene 1,2-dioxygenase subunit beta (bnzB) (Pseudomonas putida (strain ATCC 700007 / DSM 6899 / JCM 31910 / BCRC 17059 / LMG 24140 / F1)).